Consider the following 673-residue polypeptide: DNA ligase (673 aa).

NAD(+)-binding positions include 32 to 36, 81 to 82, and Glu113; these read DAEYD and SL. Lys115 acts as the N6-AMP-lysine intermediate in catalysis. The NAD(+) site is built by Arg136, Glu173, Lys290, and Lys314. Zn(2+) contacts are provided by Cys408, Cys411, Cys426, and Cys432. A BRCT domain is found at 595–673; the sequence is EIDSPFAGKT…EAEMIRLLGA (79 aa).

Belongs to the NAD-dependent DNA ligase family. LigA subfamily. It depends on Mg(2+) as a cofactor. Mn(2+) serves as cofactor.

It carries out the reaction NAD(+) + (deoxyribonucleotide)n-3'-hydroxyl + 5'-phospho-(deoxyribonucleotide)m = (deoxyribonucleotide)n+m + AMP + beta-nicotinamide D-nucleotide.. Functionally, DNA ligase that catalyzes the formation of phosphodiester linkages between 5'-phosphoryl and 3'-hydroxyl groups in double-stranded DNA using NAD as a coenzyme and as the energy source for the reaction. It is essential for DNA replication and repair of damaged DNA. This chain is DNA ligase, found in Serratia proteamaculans (strain 568).